The chain runs to 348 residues: Rhodopsin (348 aa).

M1 is modified (N-acetylmethionine). Topologically, residues 1–36 (MNGTEGPNFYVPFSNKTGVVRSPFEAPQYYLAEPWQ) are extracellular. Residues N2 and N15 are each glycosylated (N-linked (GlcNAc...) asparagine). The helical transmembrane segment at 37 to 61 (FSMLAAYMFLLIVLGFPINFLTLYV) threads the bilayer. At 62–73 (TVQHKKLRTPLN) the chain is on the cytoplasmic side. The helical transmembrane segment at 74-96 (YILLNLAVADLFMVFGGFTTTLY) threads the bilayer. The Extracellular segment spans residues 97-110 (TSLHGYFVFGPTGC). C110 and C187 form a disulfide bridge. Residues 111-133 (NLEGFFATLGGEIALWSLVVLAI) form a helical membrane-spanning segment. A 'Ionic lock' involved in activated form stabilization motif is present at residues 134-136 (ERY). Residues 134 to 152 (ERYVVVCKPMSNFRFGENH) lie on the Cytoplasmic side of the membrane. A helical membrane pass occupies residues 153–173 (AIMGVAFTWVMALACAAPPLV). Topologically, residues 174 to 202 (GWSRYIPQGMQCSCGALYFTLKPEINNES) are extracellular. E201 contributes to the Zn(2+) binding site. Residues 203 to 224 (FVIYMFVVHFSIPLIVIFFCYG) form a helical membrane-spanning segment. Over 225-252 (QLVFTVKEAAAQQQESATTQKAEKEVTR) the chain is Cytoplasmic. A helical membrane pass occupies residues 253-274 (MVIIMVIAFLICWLPYAGVAFY). Topologically, residues 275–286 (IFTHQGSDFGPI) are extracellular. Q279 contributes to the Zn(2+) binding site. The helical transmembrane segment at 287-308 (FMTIPAFFAKSSSVYNPVIYIM) threads the bilayer. K296 is subject to N6-(retinylidene)lysine. Residues 309–348 (MNKQFRNCMLTTLCCGKNPLGDDEASTTVSKTETSQVAPA) lie on the Cytoplasmic side of the membrane. S-palmitoyl cysteine attachment occurs at residues C322 and C323. An interaction with SAG region spans residues 330 to 348 (DDEASTTVSKTETSQVAPA). Phosphoserine is present on S334. Phosphoserine; by RK and GRK7 is present on S334. T335 and T336 each carry phosphothreonine. Residues T335 and T336 each carry the phosphothreonine; by RK and GRK7 modification. S338 bears the Phosphoserine; by RK and GRK7 mark. T340 and T342 each carry phosphothreonine. S343 carries the phosphoserine; by RK and GRK7 modification.

It belongs to the G-protein coupled receptor 1 family. Opsin subfamily. Homodimer. May form a complex composed of RHO, GRK1 and RCVRN in a Ca(2+)-dependent manner; RCVRN prevents the interaction between GRK1 and RHO. Interacts with GRK1. Interacts (phosphorylated form) with SAG. Interacts with GNAT1. Interacts with GNAT3. SAG and G-proteins compete for a common binding site. Interacts with PRCD; the interaction promotes PRCD stability. Forms a complex with ASAP1 and ARF4. Forms a complex with ASAP1, RAB11A, Rabin8/RAB3IP, ARF4 and RAB11FIP3; the complex regulates Golgi-to-cilia rhodopsin/RHO transport in photoreceptors. Phosphorylated on some or all of the serine and threonine residues present in the C-terminal region. In terms of processing, contains one covalently linked retinal chromophore. Upon light absorption, the covalently bound 11-cis-retinal is converted to all-trans-retinal. After hydrolysis of the Schiff base and release of the covalently bound all-trans-retinal, active rhodopsin is regenerated by binding of a fresh molecule of 11-cis-retinal.

It localises to the membrane. Its subcellular location is the cell projection. It is found in the cilium. The protein resides in the photoreceptor outer segment. Its function is as follows. Photoreceptor required for image-forming vision at low light intensity. Required for photoreceptor cell viability after birth. Light-induced isomerization of 11-cis to all-trans retinal triggers a conformational change that activates signaling via G-proteins. Subsequent receptor phosphorylation mediates displacement of the bound G-protein alpha subunit by the arrestin SAG and terminates signaling. The chain is Rhodopsin (RHO) from Ovis aries (Sheep).